The sequence spans 109 residues: Cell division protein ZapA (109 aa).

The stretch at 21-99 (PEQRDALNQA…IEQALLEQGR (79 aa)) forms a coiled coil.

The protein belongs to the ZapA family. Type 1 subfamily. Homodimer. Interacts with FtsZ.

Its subcellular location is the cytoplasm. In terms of biological role, activator of cell division through the inhibition of FtsZ GTPase activity, therefore promoting FtsZ assembly into bundles of protofilaments necessary for the formation of the division Z ring. It is recruited early at mid-cell but it is not essential for cell division. The sequence is that of Cell division protein ZapA from Klebsiella pneumoniae (strain 342).